The primary structure comprises 1072 residues: DNA-directed RNA polymerase subunit beta (1072 aa).

The protein belongs to the RNA polymerase beta chain family. In plastids the minimal PEP RNA polymerase catalytic core is composed of four subunits: alpha, beta, beta', and beta''. When a (nuclear-encoded) sigma factor is associated with the core the holoenzyme is formed, which can initiate transcription.

It localises to the plastid. The protein resides in the chloroplast. It catalyses the reaction RNA(n) + a ribonucleoside 5'-triphosphate = RNA(n+1) + diphosphate. Functionally, DNA-dependent RNA polymerase catalyzes the transcription of DNA into RNA using the four ribonucleoside triphosphates as substrates. The polypeptide is DNA-directed RNA polymerase subunit beta (Oenothera elata subsp. hookeri (Hooker's evening primrose)).